A 259-amino-acid polypeptide reads, in one-letter code: Short chain dehydrogenase ausX (259 aa).

The NADP(+) site is built by Ile13, Asp59, Arg121, Tyr153, Lys157, and Val186. The active-site Proton acceptor is Tyr153. The Proton donor role is filled by Tyr153. The active-site Lowers pKa of active site Tyr is the Lys157.

Belongs to the short-chain dehydrogenases/reductases (SDR) family.

It participates in secondary metabolite biosynthesis; terpenoid biosynthesis. Short chain dehydrogenase; part of the gene cluster A that mediates the biosynthesis of the fungal meroterpenoid acetoxydehydroaustin. The first step of the pathway is the synthesis of 3,5-dimethylorsellinic acid by the polyketide synthase ausA. 3,5-dimethylorsellinic acid is then prenylated by the polyprenyl transferase ausN. Further epoxidation by the FAD-dependent monooxygenase ausM and cyclization by the probable terpene cyclase ausL lead to the formation of protoaustinoid A. Protoaustinoid A is then oxidized to spiro-lactone preaustinoid A3 by the combined action of the FAD-binding monooxygenases ausB and ausC, and the dioxygenase ausE. Acid-catalyzed keto-rearrangement and ring contraction of the tetraketide portion of preaustinoid A3 by ausJ lead to the formation of preaustinoid A4. The aldo-keto reductase ausK, with the help of ausH, is involved in the next step by transforming preaustinoid A4 into isoaustinone which is in turn hydroxylated by the P450 monooxygenase ausI to form austinolide. The cytochrome P450 monooxygenase ausG then modifies austinolide to austinol. Austinol is further acetylated to austin by the O-acetyltransferase ausP, which spontaneously changes to dehydroaustin. The cytochrome P450 monooxygenase then converts dehydroaustin is into 7-dehydrodehydroaustin. The hydroxylation catalyzed by ausR permits the second O-acetyltransferase ausQ to add an additional acetyl group to the molecule, leading to the formation of acetoxydehydroaustin. Due to genetic rearrangements of the clusters and the subsequent loss of some enzymes, the end product of the Penicillium brasilianum austinoid biosynthesis clusters is acetoxydehydroaustin. This chain is Short chain dehydrogenase ausX, found in Penicillium brasilianum.